The sequence spans 263 residues: Undecaprenyl-diphosphatase 2 (263 aa).

8 helical membrane-spanning segments follow: residues 15 to 37 (GLTE…LIGF), 42 to 62 (AKVF…VIFW), 79 to 99 (SLNL…GVLF), 107 to 127 (LFGP…MIVA), 142 to 162 (ITYK…WPGF), 183 to 203 (AEYT…LDLI), 216 to 236 (LFVT…VSFL), and 242 to 262 (VKLT…YFFI).

This sequence belongs to the UppP family.

The protein resides in the cell membrane. It carries out the reaction di-trans,octa-cis-undecaprenyl diphosphate + H2O = di-trans,octa-cis-undecaprenyl phosphate + phosphate + H(+). Its function is as follows. Catalyzes the dephosphorylation of undecaprenyl diphosphate (UPP). Confers resistance to bacitracin. The sequence is that of Undecaprenyl-diphosphatase 2 from Bacillus cereus (strain ATCC 14579 / DSM 31 / CCUG 7414 / JCM 2152 / NBRC 15305 / NCIMB 9373 / NCTC 2599 / NRRL B-3711).